The following is a 411-amino-acid chain: Serine/threonine-protein kinase 54 (411 aa).

Phosphoserine; by PHOT1 is present on residues serine 43 and serine 45. A Protein kinase domain is found at 108-385; it reads LIIKSVIARG…EEVVAMLEAI (278 aa). Residues 114–122 and lysine 135 each bind ATP; that span reads IARGTFGTV. The active-site Proton acceptor is aspartate 253. At threonine 286 the chain carries Phosphothreonine.

This sequence belongs to the protein kinase superfamily. Ser/Thr protein kinase family. Binds to CBC2. Associates with PHOT2, BLUS1 and PM H(+)-ATPase (e.g. AHA1). Post-translationally, autophosphorylated. Phosphorylated in guard cells by HT1 in response to low CO(2) concentrations and by PHOT1 after blue light (BL) exposure. Expressed in guard cells.

Its subcellular location is the cytoplasm. It localises to the cytosol. The enzyme catalyses L-seryl-[protein] + ATP = O-phospho-L-seryl-[protein] + ADP + H(+). It carries out the reaction L-threonyl-[protein] + ATP = O-phospho-L-threonyl-[protein] + ADP + H(+). Serine/threonine protein kinase that phosphorylates proteins on serine and threonine residues. Collectively with CBC2, acts as a negative regulator of stomatal opening, probably via the inhibition of plasma membrane-type ATPases (AHA1 and AHA2) activity in guard cells, but in an abscisic acid (ABA)-independent manner. However, at low concentrations of CO(2), together with CBC2, stimulates stomatal opening via the inhibition of S-type anion channels in response to blue light (BL) and red light (RL), thus being a key component to maximize photosynthesis in the light under low CO(2) conditions. Required for temperature decrease in leaves. Downstream target of HIGH LEAF TEMPERATURE1 (HT1) during low CO(2)-induced stomatal opening. Also functions in the signaling pathways of phototropins. The polypeptide is Serine/threonine-protein kinase 54 (Arabidopsis thaliana (Mouse-ear cress)).